A 122-amino-acid chain; its full sequence is Small ribosomal subunit protein uS13 (122 aa).

The interval 94 to 122 is disordered; the sequence is SLPVRGQRTKTNARTRKVHVSRSKNSRGK.

This sequence belongs to the universal ribosomal protein uS13 family. Part of the 30S ribosomal subunit. Forms a loose heterodimer with protein S19. Forms two bridges to the 50S subunit in the 70S ribosome.

In terms of biological role, located at the top of the head of the 30S subunit, it contacts several helices of the 16S rRNA. In the 70S ribosome it contacts the 23S rRNA (bridge B1a) and protein L5 of the 50S subunit (bridge B1b), connecting the 2 subunits; these bridges are implicated in subunit movement. Contacts the tRNAs in the A and P-sites. The sequence is that of Small ribosomal subunit protein uS13 from Haemophilus influenzae (strain ATCC 51907 / DSM 11121 / KW20 / Rd).